A 546-amino-acid polypeptide reads, in one-letter code: Membrane protein insertase YidC (546 aa).

Residues 8 to 28 (ILLATVLSVGILILWQVIFPT) traverse the membrane as a helical segment. Residues 31-70 (VPPKPAPPPAAEVAKPAAPASPAPGAAAPAVPAPPPDAPE) are disordered. The span at 41-60 (AEVAKPAAPASPAPGAAAPA) shows a compositional bias: low complexity. Helical transmembrane passes span 326-346 (IDYGAVAKFFALFARGLLYVM), 356-376 (WGVAIILLTVLVRLVLFPLTY), 422-442 (LGGCLPMLLQMPVWFALYAAL), 459-479 (LTAHDPYFILPIAMGISSFVM), and 498-518 (FFPGFFTVIMLFVPGGLTLYI).

Belongs to the OXA1/ALB3/YidC family. Type 1 subfamily. Interacts with the Sec translocase complex via SecD. Specifically interacts with transmembrane segments of nascent integral membrane proteins during membrane integration.

It is found in the cell inner membrane. In terms of biological role, required for the insertion and/or proper folding and/or complex formation of integral membrane proteins into the membrane. Involved in integration of membrane proteins that insert both dependently and independently of the Sec translocase complex, as well as at least some lipoproteins. Aids folding of multispanning membrane proteins. This Anaeromyxobacter sp. (strain K) protein is Membrane protein insertase YidC.